The sequence spans 64 residues: Large ribosomal subunit protein eL24 (64 aa).

Zn(2+)-binding residues include Cys6, Cys9, Cys32, and Cys36. The segment at 6–36 (CNFCGKSIEPGTGKKFVKKDGSVMFICSSKC) adopts a C4-type zinc-finger fold.

The protein belongs to the eukaryotic ribosomal protein eL24 family. Part of the 50S ribosomal subunit. Forms a cluster with proteins L3 and L14. Requires Zn(2+) as cofactor.

Binds to the 23S rRNA. In Methanococcus aeolicus (strain ATCC BAA-1280 / DSM 17508 / OCM 812 / Nankai-3), this protein is Large ribosomal subunit protein eL24.